The sequence spans 357 residues: Adenylate isopentenyltransferase 1, chloroplastic (357 aa).

The N-terminal 71 residues, 1–71 (MTELNFHLLP…NRKDKVVVIL (71 aa)), are a transit peptide targeting the chloroplast. A compositionally biased stretch (low complexity) spans 20-39 (TTTSPSFSSHSSSSSSLLSF). Residues 20–58 (TTTSPSFSSHSSSSSSLLSFTKRRRKHQPLVSSIRMEQS) are disordered. An ATP-binding site is contributed by 72 to 79 (GATGAGKS).

Belongs to the IPP transferase family. As to expression, expressed in the vascular stele of the roots, in the xylem precursor cell files in the root tip, in leaf axils, ovules, and immature seeds.

The protein localises to the plastid. It localises to the chloroplast. It carries out the reaction dimethylallyl diphosphate + AMP = N(6)-(dimethylallyl)adenosine 5'-phosphate + diphosphate. It catalyses the reaction dimethylallyl diphosphate + ADP = N(6)-(dimethylallyl)adenosine 5'-diphosphate + diphosphate. The catalysed reaction is dimethylallyl diphosphate + ATP = N(6)-(dimethylallyl)adenosine 5'-triphosphate + diphosphate. In terms of biological role, involved in cytokinin biosynthesis. Catalyzes the transfer of an isopentenyl group from dimethylallyl diphosphate (DMAPP) to ATP, ADP and AMP. Adenine, adenosine, isopentenylpyrophosphate and 1-hydroxy-2-methyl-2-(E)-butenyl 4-diphosphate (HMBDP) are not used as substrates. The chain is Adenylate isopentenyltransferase 1, chloroplastic (IPT1) from Arabidopsis thaliana (Mouse-ear cress).